We begin with the raw amino-acid sequence, 500 residues long: MSYFPWLTIIVVLPIFAGSSIFFFPHRGNKVVRWYTICICLLELLLTTYAFCYHFQLDDPLIQLEEDYKWINIFDFHWRLGIDGLSIGPILLTGFITTLATLAARPVTRDSRLFHFLMLAMYSGQIGSFSSRDLLLFFIMWELELIPVYLLLSMWGGKKRLYSATKFILYTAGGSIFLLMGVPGMGLYGSNEPILNFETSANQSYPLALEIIFYFGFLIAYAVKSPIIPLHTWLPDTHGEAHYSTCMLLAGILLKMGAYGLVRINMELLPHAHSIFSPWLMIVGTIQIIYAASTSSGQSNLKKRIAYSSVSHMGFTIIGIGSITDTGLNGAILQIISHGFIGAALFFLAGTSYDRIRLVYLDEMGGIAIPMPKIFTMFSSFSMASLALPGMSGFVAESVVFWGIITSPKYLLMPKILITFVMAIGMILTPIYSLSMSRQMFYGYKLFNVPNSYFLDSGPRELFVSICIFLPVIGIGIYPDFVLSLSVDKVEAILANYFYK.

Helical transmembrane passes span 4–24 (FPWLTIIVVLPIFAGSSIFFF), 37–57 (ICICLLELLLTTYAFCYHFQL), 84–104 (GLSIGPILLTGFITTLATLAA), 111–129 (SRLFHFLMLAMYSGQIGSF), 134–154 (LLLFFIMWELELIPVYLLLSM), 167–187 (FILYTAGGSIFLLMGVPGMGL), 208–228 (ALEIIFYFGFLIAYAVKSPII), 242–262 (HYSTCMLLAGILLKMGAYGLV), 272–292 (AHSIFSPWLMIVGTIQIIYAA), 305–325 (IAYSSVSHMGFTIIGIGSITD), 330–350 (GAILQIISHGFIGAALFFLAG), 374–396 (IFTMFSSFSMASLALPGMSGFVA), 416–436 (ILITFVMAIGMILTPIYSLSM), and 462–482 (LFVSICIFLPVIGIGIYPDFV).

Belongs to the complex I subunit 4 family.

The protein resides in the plastid. It is found in the chloroplast thylakoid membrane. The enzyme catalyses a plastoquinone + NADH + (n+1) H(+)(in) = a plastoquinol + NAD(+) + n H(+)(out). It carries out the reaction a plastoquinone + NADPH + (n+1) H(+)(in) = a plastoquinol + NADP(+) + n H(+)(out). This chain is NAD(P)H-quinone oxidoreductase chain 4, chloroplastic, found in Liriodendron tulipifera (Tuliptree).